We begin with the raw amino-acid sequence, 180 residues long: Stathmin-3 (180 aa).

Residues cysteine 22 and cysteine 24 are each lipidated (S-palmitoyl cysteine). The SLD domain maps to 38 to 180 (GDMEVKQLDK…NKEQREEMSG (143 aa)). Phosphoserine is present on residues serine 50, serine 60, serine 65, serine 68, serine 72, serine 73, and serine 81. Residues 59-82 (KSPSDLSPESPMLSSPPKKKDTSL) form a disordered region. Residues 60–74 (SPSDLSPESPMLSSP) show a composition bias toward low complexity. Positions 75–179 (PKKKDTSLEE…RNKEQREEMS (105 aa)) form a coiled coil.

Belongs to the stathmin family. Interacts with STAT3. Interacts with CLU (secreted form); this interaction may act as an important modulator during neuronal differentiation. Post-translationally, N-terminal palmitoylation promotes specific anchoring to the cytosolic leaflet of Golgi membranes and subsequent vesicular trafficking along dendrites and axons. Neuronal Stathmins are substrates for palmitoyltransferases ZDHHC3, ZDHHC7 and ZDHHC15. As to expression, neuron specific.

The protein localises to the golgi apparatus. It is found in the cell projection. The protein resides in the growth cone. Its subcellular location is the axon. It localises to the cytoplasm. The protein localises to the cytosol. Its function is as follows. Exhibits microtubule-destabilizing activity, which is antagonized by STAT3. The protein is Stathmin-3 (STMN3) of Homo sapiens (Human).